A 1396-amino-acid chain; its full sequence is uncharacterized protein (1396 aa).

88-95 serves as a coordination point for ATP; that stretch reads AYKKWGRS. 2 disordered regions span residues 146–165 and 198–388; these read EKIH…LSPT and KPCS…VKDL. Positions 198 to 221 are enriched in low complexity; the sequence is KPCSYSSSSSSSTVPPASTDTSSP. Over residues 242 to 268 the composition is skewed to basic and acidic residues; it reads MHEKAQSRSRHEKESKLSSSTIEEKPA. Residues 286-300 are compositionally biased toward low complexity; that stretch reads SWSSGSSEAGSSSSG. Basic residues predominate over residues 312 to 327; it reads VKVRHKAREIRNRKGR. 2 positions are modified to phosphoserine: serine 817 and serine 1083. Residues 1113-1137 form a disordered region; sequence PISASELSPGGGSESEFESEKDEAS. Phosphoserine occurs at positions 1197 and 1339. Positions 1347 to 1396 are disordered; that stretch reads TGERGSETKPNGLHRKMCSSASSDTGDTGSEAGGEWVGPSREELFSRTHL. A compositionally biased stretch (low complexity) spans 1365-1376; sequence SSASSDTGDTGS. Basic and acidic residues predominate over residues 1386 to 1396; sequence SREELFSRTHL.

This is an uncharacterized protein from Mus musculus (Mouse).